A 234-amino-acid chain; its full sequence is Purine nucleoside phosphorylase DeoD-type (234 aa).

Residue His-4 participates in a purine D-ribonucleoside binding. Phosphate contacts are provided by residues Gly-20, Arg-24, Arg-43, and 87–90 (RVGT). A purine D-ribonucleoside is bound by residues Glu-162, 178–180 (EME), and 202–203 (SD). Asp-203 serves as the catalytic Proton donor.

It belongs to the PNP/UDP phosphorylase family. In terms of assembly, homohexamer; trimer of homodimers.

The catalysed reaction is a purine D-ribonucleoside + phosphate = a purine nucleobase + alpha-D-ribose 1-phosphate. It catalyses the reaction a purine 2'-deoxy-D-ribonucleoside + phosphate = a purine nucleobase + 2-deoxy-alpha-D-ribose 1-phosphate. Its function is as follows. Catalyzes the reversible phosphorolytic breakdown of the N-glycosidic bond in the beta-(deoxy)ribonucleoside molecules, with the formation of the corresponding free purine bases and pentose-1-phosphate. Functionally, cleavage of adenosine and its derivatives. This is Purine nucleoside phosphorylase DeoD-type from Geobacillus stearothermophilus (Bacillus stearothermophilus).